The chain runs to 533 residues: Monogalactosyldiacylglycerol synthase 1, chloroplastic (533 aa).

Residues histidine 155 and proline 189 each coordinate a 1,2-diacyl-sn-glycero-3-phospho-(1'-sn-glycerol). Residue histidine 155 participates in UDP binding. The interval 192–215 (QLPRSYNFLVKHGTLWKMTYYGTS) is required for binding to diacyl glycerol. UDP-binding positions include arginine 324, phenylalanine 413, isoleucine 414, 434–438 (GTIAE), and glutamate 456.

This sequence belongs to the glycosyltransferase 28 family. Homodimer. As to expression, expressed in roots, stems, leaves, flowers, siliques and seeds.

The protein resides in the plastid. The protein localises to the chloroplast inner membrane. It carries out the reaction a 1,2-diacyl-sn-glycerol + UDP-alpha-D-galactose = a 1,2-diacyl-3-O-(beta-D-galactosyl)-sn-glycerol + UDP + H(+). It catalyses the reaction 1,2-di-(9Z,12Z-octadecadienoyl)-sn-glycerol + UDP-alpha-D-galactose = 1,2-di-(9Z,12Z-octadecadienoyl)-3-beta-D-galactosyl-sn-glycerol + UDP + H(+). The enzyme catalyses 1-(9Z-octadecenoyl)-2-hexadecanoyl-sn-glycerol + UDP-alpha-D-galactose = 1-(9Z-octadecenoyl)-2-hexadecanoyl-3-beta-D-galactosyl-sn-glycerol + UDP + H(+). The catalysed reaction is 1,2-di-(9Z-octadecenoyl)-sn-glycerol + UDP-alpha-D-galactose = 1,2-di-(9Z-octadecenoyl)-3-beta-D-galactosyl-sn-glycerol + UDP + H(+). Activated by phosphatidate (PA) and phosphatidylglycerol (PG). Inhibited by galvestine-1. In terms of biological role, involved in the synthesis of the major structural component of photosynthetic membranes. Required for proper thylakoid membrane biogenesis. Does not discriminate between prokaryotic (18:1/16:0) or eukaryotic (18:2/18:2) 1,2-diacylglycerol species, but operates with some preference for the prokaryotic one. Is responsible for most galactolipid synthesis in chloroplasts. Required for the formation of thylakoid membranes and functional photosynthetic electron transport during cotyledons greening in young seedlings. May link galactolipid synthesis with the coordinated transcriptional regulation of chloroplasts and other organelles during cotyledon greening. The protein is Monogalactosyldiacylglycerol synthase 1, chloroplastic of Arabidopsis thaliana (Mouse-ear cress).